We begin with the raw amino-acid sequence, 1388 residues long: DNA-directed RNA polymerase subunit beta' (1388 aa).

The Zn(2+) site is built by cysteine 76, cysteine 78, cysteine 91, and cysteine 94. Mg(2+) is bound by residues aspartate 467, aspartate 469, and aspartate 471. 4 residues coordinate Zn(2+): cysteine 810, cysteine 884, cysteine 891, and cysteine 894.

The protein belongs to the RNA polymerase beta' chain family. The RNAP catalytic core consists of 2 alpha, 1 beta, 1 beta' and 1 omega subunit. When a sigma factor is associated with the core the holoenzyme is formed, which can initiate transcription. Mg(2+) is required as a cofactor. The cofactor is Zn(2+).

The enzyme catalyses RNA(n) + a ribonucleoside 5'-triphosphate = RNA(n+1) + diphosphate. Its function is as follows. DNA-dependent RNA polymerase catalyzes the transcription of DNA into RNA using the four ribonucleoside triphosphates as substrates. This is DNA-directed RNA polymerase subunit beta' from Lawsonia intracellularis (strain PHE/MN1-00).